Reading from the N-terminus, the 204-residue chain is Inactive ribonuclease-like protein 9 (204 aa).

The signal sequence occupies residues 1 to 26 (MMRTLITIHPLPLLLLLQQLLQPVQF). 3 disulfides stabilise this stretch: C97–C152, C115–C167, and C122–C129. 2 N-linked (GlcNAc...) asparagine glycosylation sites follow: N130 and N142.

This sequence belongs to the pancreatic ribonuclease family.

The protein resides in the secreted. Does not exhibit any ribonuclease activity. The protein is Inactive ribonuclease-like protein 9 (RNASE9) of Symphalangus syndactylus (Siamang).